The chain runs to 709 residues: Homeobox-leucine zipper protein HDG4 (709 aa).

Positions 61–92 (ESGSGKSTGSGHDPVENTAIEQEPPAAKKKRY) are disordered. Positions 88–147 (KKKRYHRHTASQIQQMEALFKENAHPDTKTRLRLSKKLGLSPIQVKFWFQNKRTQIKAQQ) form a DNA-binding region, homeobox. Positions 137–205 (QNKRTQIKAQ…LDRLRSIVSM (69 aa)) form a coiled coil. An START domain is found at 229 to 466 (AEEEKAIDME…LKRQCERMAS (238 aa)).

The protein belongs to the HD-ZIP homeobox family. Class IV subfamily. In terms of tissue distribution, expressed in flowers.

It localises to the nucleus. In terms of biological role, probable transcription factor. This is Homeobox-leucine zipper protein HDG4 from Arabidopsis thaliana (Mouse-ear cress).